We begin with the raw amino-acid sequence, 125 residues long: Phosphoribosyl-AMP cyclohydrolase (125 aa).

Asp-74 is a Mg(2+) binding site. Cys-75 contributes to the Zn(2+) binding site. Asp-76 and Asp-78 together coordinate Mg(2+). The Zn(2+) site is built by Cys-92 and Cys-99.

Belongs to the PRA-CH family. In terms of assembly, homodimer. Requires Mg(2+) as cofactor. Zn(2+) serves as cofactor.

Its subcellular location is the cytoplasm. The enzyme catalyses 1-(5-phospho-beta-D-ribosyl)-5'-AMP + H2O = 1-(5-phospho-beta-D-ribosyl)-5-[(5-phospho-beta-D-ribosylamino)methylideneamino]imidazole-4-carboxamide. The protein operates within amino-acid biosynthesis; L-histidine biosynthesis; L-histidine from 5-phospho-alpha-D-ribose 1-diphosphate: step 3/9. In terms of biological role, catalyzes the hydrolysis of the adenine ring of phosphoribosyl-AMP. In Pelobacter propionicus (strain DSM 2379 / NBRC 103807 / OttBd1), this protein is Phosphoribosyl-AMP cyclohydrolase.